The primary structure comprises 513 residues: Probable G-protein coupled receptor Mth-like 9 (513 aa).

The signal sequence occupies residues 1–19 (MVSPLIILLIIWLSVGAKS). Over 20–207 (VEIASINHPC…NCERFQTGYR (188 aa)) the chain is Extracellular. 4 cysteine pairs are disulfide-bonded: Cys-29/Cys-82, Cys-84/Cys-89, Cys-93/Cys-181, and Cys-94/Cys-107. Asn-36 is a glycosylation site (N-linked (GlcNAc...) asparagine). 3 N-linked (GlcNAc...) asparagine glycosylation sites follow: Asn-106, Asn-125, and Asn-165. Residues 208 to 228 (VWIYAICSIIAIIINIFILSL) form a helical membrane-spanning segment. Residues 229–242 (LGSVRDARKSHYGQ) are Cytoplasmic-facing. The chain crosses the membrane as a helical span at residues 243 to 263 (LIIYYLLSMIVGYSLLVYLAL). Residues 264–276 (KNPMKLSHVACRN) are Extracellular-facing. A helical transmembrane segment spans residues 277–297 (IGFLAYFCIMLSFVFLAICSL). Residues 298-314 (DFLLKFKQKAVRSSVRR) lie on the Cytoplasmic side of the membrane. A helical transmembrane segment spans residues 315–335 (LSLALAVLAVIGLRFLVSLAQ). At 336 to 360 (DSKLPKHFKPGMGEDYCWFDVRTWG) the chain is on the extracellular side. A helical transmembrane segment spans residues 361–381 (ILIYYYGPIALLLIFSIVCCL). The Cytoplasmic segment spans residues 382-403 (KAYFSIYELPPDTQYILGTQLK). A helical transmembrane segment spans residues 404 to 424 (IVKTHFYAFSAYIVGVFAVWI). Topologically, residues 425–438 (REIVVYIMARVREH) are extracellular. A helical transmembrane segment spans residues 439-459 (FFIIDFWSGICILGLAIAGFI). The Cytoplasmic portion of the chain corresponds to 460–513 (LLLGKNLHVKSWWAINVESSQTDLSIINARVYKFDEKGDLKSSDSPYKPTVTSL).

It belongs to the G-protein coupled receptor 2 family. Mth subfamily.

Its subcellular location is the cell membrane. The protein is Probable G-protein coupled receptor Mth-like 9 (mthl9) of Drosophila melanogaster (Fruit fly).